The following is a 122-amino-acid chain: Large ribosomal subunit protein uL14 (122 aa).

This sequence belongs to the universal ribosomal protein uL14 family. As to quaternary structure, part of the 50S ribosomal subunit. Forms a cluster with proteins L3 and L19. In the 70S ribosome, L14 and L19 interact and together make contacts with the 16S rRNA in bridges B5 and B8.

Functionally, binds to 23S rRNA. Forms part of two intersubunit bridges in the 70S ribosome. The protein is Large ribosomal subunit protein uL14 of Lactobacillus delbrueckii subsp. bulgaricus (strain ATCC BAA-365 / Lb-18).